A 607-amino-acid polypeptide reads, in one-letter code: Fatty acid amide hydrolase (607 aa).

Catalysis depends on charge relay system residues Lys204 and Ser280. 301-304 (GGGS) lines the substrate pocket. Residue Ser304 is the Acyl-ester intermediate of the active site.

This sequence belongs to the amidase family. As to quaternary structure, forms homodimers.

Its subcellular location is the endoplasmic reticulum membrane. It is found in the cell membrane. It carries out the reaction N-(9Z,12Z-octadecadienoyl)-ethanolamine + H2O = ethanolamine + (9Z,12Z)-octadecadienoate. Catalyzes the hydrolysis of bioactive endogenous fatty acid amides to their corresponding acids. The hydrolysis of endogenous amidated lipids terminates their participation as lipid mediators in various signaling systems. Converts a wide range of N-acylethanolamines (NAEs) to their corresponding free fatty acids and ethanolamine. This chain is Fatty acid amide hydrolase, found in Medicago truncatula (Barrel medic).